Reading from the N-terminus, the 231-residue chain is Putative cobalt transport protein CbiM 1 (231 aa).

A run of 6 helical transmembrane segments spans residues 8–28 (LPLQ…AYGI), 41–61 (TLPL…LKMP), 74–94 (GLGA…IVLV), 97–117 (ALFL…SMGI), 138–158 (IVNV…ITSI), and 175–195 (FITF…IEGI).

This sequence belongs to the CbiM family. Forms an energy-coupling factor (ECF) transporter complex composed of an ATP-binding protein (A component, CbiO), a transmembrane protein (T component, CbiQ) and 2 possible substrate-capture proteins (S components, CbiM and CbiN) of unknown stoichimetry.

It is found in the cell membrane. It participates in cofactor biosynthesis; adenosylcobalamin biosynthesis. In terms of biological role, part of the energy-coupling factor (ECF) transporter complex CbiMNOQ involved in cobalt import. This chain is Putative cobalt transport protein CbiM 1, found in Methanosphaerula palustris (strain ATCC BAA-1556 / DSM 19958 / E1-9c).